Here is a 417-residue protein sequence, read N- to C-terminus: Gamma-glutamyl phosphate reductase (417 aa).

Belongs to the gamma-glutamyl phosphate reductase family.

It localises to the cytoplasm. It carries out the reaction L-glutamate 5-semialdehyde + phosphate + NADP(+) = L-glutamyl 5-phosphate + NADPH + H(+). It participates in amino-acid biosynthesis; L-proline biosynthesis; L-glutamate 5-semialdehyde from L-glutamate: step 2/2. Its function is as follows. Catalyzes the NADPH-dependent reduction of L-glutamate 5-phosphate into L-glutamate 5-semialdehyde and phosphate. The product spontaneously undergoes cyclization to form 1-pyrroline-5-carboxylate. The chain is Gamma-glutamyl phosphate reductase from Desulfitobacterium hafniense (strain DSM 10664 / DCB-2).